The following is a 485-amino-acid chain: MAVKPKQPPAQEQHGYEFFGPPGAFAISFFLPVLVYVFNFVCNDISGCPAPSLLQPKTFSLDALKQEVGWPHNGVAGLVSWNGTLAVIGYNVLSLILYRVLPAIEVEGTQLSSGGRLKYRFNTLYSSTFTLAVLAAGTIAQGAEFPVWTFMSENFIQILSANIIYSYLVSTFVYVRSFSVKHGNKENRELAAGGHSGNILYDWFIGRELNPRIEIPLIGEVDIKEFLELRPGMMGWIIMNCSWCAQQYRNYGFVTDSSILITAVQALYVFDSWWNEPAILTTMDITTDGFGMMLAFGDIVWVPYVYSLQTRYLSVHPVSLGPLGLAAMLGLIGLGFYIFRSANNEKNRFRTNPNDPRVSHLKYIQTKTGSKLLTTGWWGMSRHINYLGDWIQSWPYCLPTGLAGYQIMSAGANIEGAYVMHDGREVVQGEAQGWGMLITYFYILYFGILLIHRERRDDEKCHRKYGKDWEEYRKIVRSRIVPGLY.

Helical transmembrane passes span 18–38 (FFGP…VYVF), 77–97 (GLVS…SLIL), 131–151 (LAVL…WTFM), and 155–175 (FIQI…FVYV). N-linked (GlcNAc...) asparagine glycosylation occurs at Asn-240. The next 4 helical transmembrane spans lie at 259-279 (ILIT…EPAI), 285-305 (ITTD…VPYV), 319-339 (SLGP…FYIF), and 431-451 (AQGW…ILLI).

The protein belongs to the ERG4/ERG24 family.

The protein localises to the endoplasmic reticulum membrane. The catalysed reaction is 4,4-dimethyl-5alpha-cholesta-8,24-dien-3beta-ol + NADP(+) = 4,4-dimethyl-5alpha-cholesta-8,14,24-trien-3beta-ol + NADPH + H(+). The protein operates within steroid metabolism; ergosterol biosynthesis. Delta(14)-sterol reductase; part of the third module of ergosterol biosynthesis pathway that includes the late steps of the pathway. Catalyzes the reduction of the C14=C15 double bond within 4,4,24-trimethyl ergosta-8,14,24(28)-trienolto produce 4,4-dimethylfecosterol. The third module or late pathway involves the ergosterol synthesis itself through consecutive reactions that mainly occur in the endoplasmic reticulum (ER) membrane. Firstly, the squalene synthase ERG9 catalyzes the condensation of 2 farnesyl pyrophosphate moieties to form squalene, which is the precursor of all steroids. Squalene synthase is crucial for balancing the incorporation of farnesyl diphosphate (FPP) into sterol and nonsterol isoprene synthesis. Secondly, squalene is converted into lanosterol by the consecutive action of the squalene epoxidase ERG1 and the lanosterol synthase ERG7. Then, the delta(24)-sterol C-methyltransferase ERG6 methylates lanosterol at C-24 to produce eburicol. Eburicol is the substrate of the sterol 14-alpha demethylase encoded by CYP51A, CYP51B and CYP51C, to yield 4,4,24-trimethyl ergosta-8,14,24(28)-trienol. CYP51B encodes the enzyme primarily responsible for sterol 14-alpha-demethylation, and plays an essential role in ascospore formation. CYP51A encodes an additional sterol 14-alpha-demethylase, induced on ergosterol depletion and responsible for the intrinsic variation in azole sensitivity. The third CYP51 isoform, CYP51C, does not encode a sterol 14-alpha-demethylase, but is required for full virulence on host wheat ears. The C-14 reductase ERG24 then reduces the C14=C15 double bond which leads to 4,4-dimethylfecosterol. A sequence of further demethylations at C-4, involving the C-4 demethylation complex containing the C-4 methylsterol oxidases ERG25, the sterol-4-alpha-carboxylate 3-dehydrogenase ERG26 and the 3-keto-steroid reductase ERG27, leads to the production of fecosterol via 4-methylfecosterol. ERG28 has a role as a scaffold to help anchor ERG25, ERG26 and ERG27 to the endoplasmic reticulum. The C-8 sterol isomerase ERG2 then catalyzes the reaction which results in unsaturation at C-7 in the B ring of sterols and thus converts fecosterol to episterol. The sterol-C5-desaturases ERG3A and ERG3BB then catalyze the introduction of a C-5 double bond in the B ring to produce 5-dehydroepisterol. The C-22 sterol desaturases ERG5A and ERG5B further convert 5-dehydroepisterol into ergosta-5,7,22,24(28)-tetraen-3beta-ol by forming the C-22(23) double bond in the sterol side chain. Finally, ergosta-5,7,22,24(28)-tetraen-3beta-ol is substrate of the C-24(28) sterol reductase ERG4 to produce ergosterol. This chain is Delta(14)-sterol reductase ERG24A, found in Gibberella zeae (strain ATCC MYA-4620 / CBS 123657 / FGSC 9075 / NRRL 31084 / PH-1) (Wheat head blight fungus).